Consider the following 164-residue polypeptide: Transcription elongation factor GreA (164 aa).

Positions 11–76 form a coiled coil; that stretch reads EESYDRLKAE…LQELLNNAKV (66 aa).

Belongs to the GreA/GreB family.

Functionally, necessary for efficient RNA polymerase transcription elongation past template-encoded arresting sites. The arresting sites in DNA have the property of trapping a certain fraction of elongating RNA polymerases that pass through, resulting in locked ternary complexes. Cleavage of the nascent transcript by cleavage factors such as GreA or GreB allows the resumption of elongation from the new 3'terminus. GreA releases sequences of 2 to 3 nucleotides. This chain is Transcription elongation factor GreA, found in Mycolicibacterium vanbaalenii (strain DSM 7251 / JCM 13017 / BCRC 16820 / KCTC 9966 / NRRL B-24157 / PYR-1) (Mycobacterium vanbaalenii).